The sequence spans 232 residues: Putative N-acetylmannosamine-6-phosphate 2-epimerase (232 aa).

This sequence belongs to the NanE family.

The enzyme catalyses an N-acyl-D-glucosamine 6-phosphate = an N-acyl-D-mannosamine 6-phosphate. It participates in amino-sugar metabolism; N-acetylneuraminate degradation; D-fructose 6-phosphate from N-acetylneuraminate: step 3/5. In terms of biological role, converts N-acetylmannosamine-6-phosphate (ManNAc-6-P) to N-acetylglucosamine-6-phosphate (GlcNAc-6-P). This chain is Putative N-acetylmannosamine-6-phosphate 2-epimerase, found in Borrelia garinii subsp. bavariensis (strain ATCC BAA-2496 / DSM 23469 / PBi) (Borreliella bavariensis).